The sequence spans 152 residues: Deoxyuridine 5'-triphosphate nucleotidohydrolase (152 aa).

Substrate is bound by residues 63 to 65 (RSG), Asn76, and 80 to 82 (TID). The interval 129–152 (LDDTERGQGGYGSTGVSAMPPVDG) is disordered.

Belongs to the dUTPase family. Requires Mg(2+) as cofactor.

The catalysed reaction is dUTP + H2O = dUMP + diphosphate + H(+). It functions in the pathway pyrimidine metabolism; dUMP biosynthesis; dUMP from dCTP (dUTP route): step 2/2. Its function is as follows. This enzyme is involved in nucleotide metabolism: it produces dUMP, the immediate precursor of thymidine nucleotides and it decreases the intracellular concentration of dUTP so that uracil cannot be incorporated into DNA. The polypeptide is Deoxyuridine 5'-triphosphate nucleotidohydrolase (Cutibacterium acnes (strain DSM 16379 / KPA171202) (Propionibacterium acnes)).